We begin with the raw amino-acid sequence, 420 residues long: Probable protein phosphatase 2C 73 (420 aa).

Residues 33–336 (GVSMHTKQGW…DDCAVVCLFL (304 aa)) form the PPM-type phosphatase domain. 2 residues coordinate Mn(2+): Asp69 and Gly70. Polar residues predominate over residues 96 to 105 (LKTEQDPSSN). Residues 96–119 (LKTEQDPSSNTDKETLEKSDCTSL) are disordered. The span at 106-115 (TDKETLEKSD) shows a compositional bias: basic and acidic residues. Mn(2+) contacts are provided by Asp281 and Asp327.

This sequence belongs to the PP2C family. The cofactor is Mg(2+). Mn(2+) is required as a cofactor.

The catalysed reaction is O-phospho-L-seryl-[protein] + H2O = L-seryl-[protein] + phosphate. It carries out the reaction O-phospho-L-threonyl-[protein] + H2O = L-threonyl-[protein] + phosphate. This is Probable protein phosphatase 2C 73 from Oryza sativa subsp. japonica (Rice).